The primary structure comprises 628 residues: 1-deoxy-D-xylulose-5-phosphate synthase (628 aa).

Thiamine diphosphate is bound by residues H72 and 113–115 (GHS). D144 serves as a coordination point for Mg(2+). Residues 145–146 (GA), N173, Y284, and E363 contribute to the thiamine diphosphate site. Position 173 (N173) interacts with Mg(2+).

It belongs to the transketolase family. DXPS subfamily. As to quaternary structure, homodimer. It depends on Mg(2+) as a cofactor. Thiamine diphosphate serves as cofactor.

The catalysed reaction is D-glyceraldehyde 3-phosphate + pyruvate + H(+) = 1-deoxy-D-xylulose 5-phosphate + CO2. It functions in the pathway metabolic intermediate biosynthesis; 1-deoxy-D-xylulose 5-phosphate biosynthesis; 1-deoxy-D-xylulose 5-phosphate from D-glyceraldehyde 3-phosphate and pyruvate: step 1/1. In terms of biological role, catalyzes the acyloin condensation reaction between C atoms 2 and 3 of pyruvate and glyceraldehyde 3-phosphate to yield 1-deoxy-D-xylulose-5-phosphate (DXP). The polypeptide is 1-deoxy-D-xylulose-5-phosphate synthase (Brevibacillus brevis (strain 47 / JCM 6285 / NBRC 100599)).